We begin with the raw amino-acid sequence, 263 residues long: Diphthine synthase (263 aa).

S-adenosyl-L-methionine is bound by residues Leu9, Asp84, Met87, 112–113 (SI), Leu164, Ala207, and His232.

This sequence belongs to the diphthine synthase family. As to quaternary structure, homodimer.

The enzyme catalyses 2-[(3S)-amino-3-carboxypropyl]-L-histidyl-[translation elongation factor 2] + 3 S-adenosyl-L-methionine = diphthine-[translation elongation factor 2] + 3 S-adenosyl-L-homocysteine + 3 H(+). Its pathway is protein modification; peptidyl-diphthamide biosynthesis. In terms of biological role, S-adenosyl-L-methionine-dependent methyltransferase that catalyzes the trimethylation of the amino group of the modified target histidine residue in translation elongation factor 2 (EF-2), to form an intermediate called diphthine. The three successive methylation reactions represent the second step of diphthamide biosynthesis. The polypeptide is Diphthine synthase (Methanosphaera stadtmanae (strain ATCC 43021 / DSM 3091 / JCM 11832 / MCB-3)).